The primary structure comprises 216 residues: Orotate phosphoribosyltransferase (216 aa).

5-phospho-alpha-D-ribose 1-diphosphate is bound at residue Lys30. Residue 38-39 participates in orotate binding; the sequence is FF. 5-phospho-alpha-D-ribose 1-diphosphate-binding positions include 75 to 76, Arg102, Lys103, Lys106, His108, and 128 to 136; these read YK and DDVITAGTA. 2 residues coordinate orotate: Thr132 and Arg160.

Belongs to the purine/pyrimidine phosphoribosyltransferase family. PyrE subfamily. Homodimer. Mg(2+) serves as cofactor.

It carries out the reaction orotidine 5'-phosphate + diphosphate = orotate + 5-phospho-alpha-D-ribose 1-diphosphate. It participates in pyrimidine metabolism; UMP biosynthesis via de novo pathway; UMP from orotate: step 1/2. Its function is as follows. Catalyzes the transfer of a ribosyl phosphate group from 5-phosphoribose 1-diphosphate to orotate, leading to the formation of orotidine monophosphate (OMP). The sequence is that of Orotate phosphoribosyltransferase from Acinetobacter baumannii (strain ATCC 17978 / DSM 105126 / CIP 53.77 / LMG 1025 / NCDC KC755 / 5377).